The primary structure comprises 419 residues: Serine/threonine-protein kinase Kist (419 aa).

The Protein kinase domain maps to 23-303 (WQVQSRLGSG…PAEMALCSPF (281 aa)). ATP is bound by residues 29–37 (LGSGSSASV) and lysine 54. Aspartate 158 serves as the catalytic Proton acceptor. The 83-residue stretch at 323–405 (LRLLNVLDDD…GKFVVATFYP (83 aa)) folds into the RRM domain.

It belongs to the protein kinase superfamily. Ser/Thr protein kinase family. As to quaternary structure, interacts with PAM and CDKN1B/p27Kip1. Interacts with stathmin.

It localises to the nucleus. It carries out the reaction L-seryl-[protein] + ATP = O-phospho-L-seryl-[protein] + ADP + H(+). The catalysed reaction is L-threonyl-[protein] + ATP = O-phospho-L-threonyl-[protein] + ADP + H(+). Its function is as follows. Upon serum stimulation, phosphorylates CDKN1B/p27Kip1, thus controlling CDKN1B subcellular location and cell cycle progression in G1 phase. May be involved in trafficking and/or processing of RNA. This is Serine/threonine-protein kinase Kist (Uhmk1) from Mus musculus (Mouse).